Consider the following 260-residue polypeptide: UPF0246 protein Bcep1808_2308 (260 aa).

The protein belongs to the UPF0246 family.

This Burkholderia vietnamiensis (strain G4 / LMG 22486) (Burkholderia cepacia (strain R1808)) protein is UPF0246 protein Bcep1808_2308.